Here is a 329-residue protein sequence, read N- to C-terminus: Cathepsin K (329 aa).

The first 15 residues, 1–15 (MWVFKFLLLPVVSFA), serve as a signal peptide directing secretion. A propeptide spans 16 to 114 (LSPEETLDTQ…TLYTPEWEGR (99 aa)) (activation peptide). Residue asparagine 103 is glycosylated (N-linked (GlcNAc...) asparagine). Intrachain disulfides connect cysteine 136-cysteine 177 and cysteine 170-cysteine 210. Residue cysteine 139 is part of the active site. N-linked (GlcNAc...) asparagine glycosylation is present at asparagine 213. The cysteines at positions 269 and 318 are disulfide-linked. Active-site residues include histidine 276 and asparagine 296.

It belongs to the peptidase C1 family.

It localises to the lysosome. Its subcellular location is the secreted. The protein resides in the apical cell membrane. It carries out the reaction Broad proteolytic activity. With small-molecule substrates and inhibitors, the major determinant of specificity is P2, which is preferably Leu, Met &gt; Phe, and not Arg.. In terms of biological role, thiol protease involved in osteoclastic bone resorption and may participate partially in the disorder of bone remodeling. Displays potent endoprotease activity against fibrinogen at acid pH. May play an important role in extracellular matrix degradation. Involved in the release of thyroid hormone thyroxine (T4) by limited proteolysis of TG/thyroglobulin in the thyroid follicle lumen. This is Cathepsin K (Ctsk) from Rattus norvegicus (Rat).